We begin with the raw amino-acid sequence, 547 residues long: MGCTFLPLESAFMLQFTRCFGSRTANKGFQLLPDFKLKCGLEIHTQLSTQNKLFSLSTNDPFASANLPNHHTSFFDVSLPGSQPKLNPEVVLFATKLAVALNSKVNLNSHFDRKHYFYADQPMGYQITQHYSPFAKGGFLELLGSLDSIDENSKRIQLVQLQIEQDTGKSVYRGSEGRSLIDLNRSNVPLIELVTQPNFTDLKQIRAFIKKFQNLVRHLGISTGDLETGAMRVDVNLSVNGYSRVELKNLPNTSSILSAIKYEYQRQVGLIQSGEADKYLSSSETRGWTGSSTVKLRSKETTIDYRYMPDPELPSIKISPGTVQSVSQSMPKLPDAVLHDLMSEPYGLALKDAKILAIKGNGHDQLYTQTSLLKYYLDTFSCYSTLAGQQLNPRLPTNWIIHELLGNLNRLQLPLEKAAEAFPPKKFAELLMLIQDDKISKASGKLLLFHILNEINKLSLAQPVDLSALIEGFDLNVIKKIDANELREICTEIVGGISDPKLIEGIVSGKKKNSLKFLIGQGMRVSQGRIKPHLFEQAFKELLKVKW.

The protein belongs to the GatB/GatE family. GatB subfamily. In terms of assembly, subunit of the heterotrimeric GatFAB amidotransferase (AdT) complex, composed of A, B and F subunits.

The protein resides in the mitochondrion. It carries out the reaction L-glutamyl-tRNA(Gln) + L-glutamine + ATP + H2O = L-glutaminyl-tRNA(Gln) + L-glutamate + ADP + phosphate + H(+). Allows the formation of correctly charged Gln-tRNA(Gln) through the transamidation of misacylated Glu-tRNA(Gln) in the mitochondria. The reaction takes place in the presence of glutamine and ATP through an activated gamma-phospho-Glu-tRNA(Gln). The sequence is that of Glutamyl-tRNA(Gln) amidotransferase subunit B, mitochondrial from Lachancea thermotolerans (strain ATCC 56472 / CBS 6340 / NRRL Y-8284) (Yeast).